Here is a 1466-residue protein sequence, read N- to C-terminus: MSDDYELKELQPPEGANCNYNINTPQYENNNNNNNNTSGNESPNILNSENQFNQVANELENDSKQFFSNQDPEMNVEHSNVAQNEQDFKLRSYFENSQRIALGNGQKPKKMGISIRNLTVVGKGADISVISDLSTPFVTIFNLFRPSTWRKSSGSTFDILHDVTLFNRDAEMLLVLGRPGAGCSTLLRVISNQRSSYVSVSGDVTYGGINSDEWKNFKGESIYTPEEDTHHPTLTVRETLNFALKCKTIHNRLPDEKKKTFRKKIYDLLVGMFGISKQSDTLVGNEFIRGLSGGERKRLTITEAMVSSASITCYDCSTRGLDAASALDYAKSIRIMSDTLHKTTIASFYQASDSIFNLFNNVAILEKGRLIYFGPVGLAKQYFLDLGFDCEPRKSTPDFLTGVTNPQERKVRPGFEGRAPETSSDFEKAWKSSDLYQVMLQQQLEYEKKIELEQPSTNFIEQIRNENSKTNPTKSIYTTSYFTQVRALIARNSQIIWGDRFALISKYISIIVQTFVYASLFYNMKSDVTGLFNRGGAIYAAILFNAFVSAGELGLTFYGRRILQKQHSYAMYRPSALHIAMVITDIPLTAIQVTIFSVIVYFMYGLQVDAGKFFIFLFTIFGSTLSMVAFFRALGNLSPSLYVSQNILNVFILFMFTYGGYSIPKNKMHPWFSWYFWINPFSFPYKALMANEFGDMNFTCNDQTAIPNGNYIASNGSTMSYQDQYRACPSAGAIEGQMVNGEFYVAGSNYIDAALDFKSDDRTLNVIITFLWWIFFVIINMIALELFDWTSGGMPHKVYKRGKAPKINDDEEERQQNAMVENATSKMKDTLKMRESCFTWNHIHYTVQLNGKDLLLLNDVEGWIKPGQMTALMGSSGAGKTTLLDVLAKRKTMGTVTGKCLLNGKELNIDFERITGYVEQMDVHNPGLTVREALRFSAKLRQEPTVSLQDKYEYVEQVLEMMEMKHLGDALIGSLETGIGISVEERKRLTIGIELVAKPHILFLDEPTSGLDSQSSYNIVKFIRKLADAGMPLVCTIHQPSSVLFEYFDRILLLAKGGKTVYYGDIGEKSKTLTSYFERNGVRSCTESENPAEYILEAIGAGTNPGVSTIDWPEVWKQSPELQDVQAELASLETAATVQISSDDQDHGPPREFATSIWYQTWEVYKRLNLIWWRDMSYVYGIFTQAAASGLIIGFTFWNLDLSSSDMNQRVFFIFEILFLGILYIFIAIPQFLIQKAYFKKDYASKFYSWCPFAISIVIVELPFVAVAGTICFFCSFWTAGIYYNGEYDFYFYITFILFLFICVSLGQVVSAFCFNVMLAQTILPLLLVMLFLFCGVLVPYEQIPNFWKFVYHSNPCRYFLEGVVTSVLKNVFVDCSNEDLTKFSNPTNLTCKEYFKPTYGNVRAVTKGDESECGYCVFKSGEEYYKTLGWSYENRLRNYGILWAFFIFNIIMVVSFVYLTKKPNR.

Positions 23–45 (NTPQYENNNNNNNNTSGNESPNI) are enriched in low complexity. Positions 23–47 (NTPQYENNNNNNNNTSGNESPNILN) are disordered. An ABC transporter 1 domain is found at 138–392 (VTIFNLFRPS…FLDLGFDCEP (255 aa)). Residues 497 to 724 (WGDRFALISK…NGSTMSYQDQ (228 aa)) form the ABC transmembrane type-2 1 domain. 6 consecutive transmembrane segments (helical) span residues 501 to 521 (FALI…ASLF), 537 to 557 (AIYA…GLTF), 586 to 606 (IPLT…MYGL), 611 to 631 (GKFF…VAFF), 641 to 661 (LYVS…YGGY), and 767 to 787 (IITF…LELF). An ABC transporter 2 domain is found at 838 to 1082 (FTWNHIHYTV…LTSYFERNGV (245 aa)). 874–881 (GSSGAGKT) contributes to the ATP binding site. The ABC transmembrane type-2 2 domain occupies 1177–1399 (SYVYGIFTQA…LTCKEYFKPT (223 aa)). The next 6 helical transmembrane spans lie at 1178–1198 (YVYG…FTFW), 1214–1234 (IFEI…QFLI), 1253–1273 (FAIS…TICF), 1290–1310 (FYFY…GQVV), 1319–1339 (LAQT…GVLV), and 1440–1460 (YGIL…FVYL).

This sequence belongs to the ABC transporter superfamily. ABCG family. PDR (TC 3.A.1.205) subfamily.

The protein resides in the membrane. The protein is ABC transporter G family member 10 (abcG10) of Dictyostelium discoideum (Social amoeba).